We begin with the raw amino-acid sequence, 421 residues long: Adenylosuccinate synthetase (421 aa).

GTP is bound by residues 11-17 and 39-41; these read GDEGKGK and GHT. Asp-12 (proton acceptor) is an active-site residue. Mg(2+) is bound by residues Asp-12 and Gly-39. Residues 12–15, 37–40, Thr-124, Arg-138, Gln-220, Thr-235, and Arg-299 each bind IMP; these read DEGK and NAGH. The active-site Proton donor is His-40. Substrate is bound at residue 295–301; it reads TTTGRPR. GTP-binding positions include Arg-301, 327 to 329, and 409 to 411; these read KLD and SVG.

Belongs to the adenylosuccinate synthetase family. In terms of assembly, homodimer. Mg(2+) serves as cofactor.

The protein localises to the cytoplasm. The enzyme catalyses IMP + L-aspartate + GTP = N(6)-(1,2-dicarboxyethyl)-AMP + GDP + phosphate + 2 H(+). It participates in purine metabolism; AMP biosynthesis via de novo pathway; AMP from IMP: step 1/2. Functionally, plays an important role in the de novo pathway of purine nucleotide biosynthesis. Catalyzes the first committed step in the biosynthesis of AMP from IMP. The chain is Adenylosuccinate synthetase from Methanothrix thermoacetophila (strain DSM 6194 / JCM 14653 / NBRC 101360 / PT) (Methanosaeta thermophila).